A 617-amino-acid polypeptide reads, in one-letter code: Neurosecretory protein VGF (617 aa).

An N-terminal signal peptide occupies residues methionine 1 to alanine 23. Disordered regions lie at residues serine 29 to phenylalanine 75, proline 94 to alanine 113, valine 121 to glutamate 157, and leucine 169 to threonine 192. The span at alanine 48–arginine 64 shows a compositional bias: basic and acidic residues. The span at asparagine 148–glutamate 157 shows a compositional bias: acidic residues. Glutamine 180 is subject to Pyrrolidone carboxylic acid. Positions glutamate 182–threonine 192 are enriched in low complexity. Glutamine 313 carries the pyrrolidone carboxylic acid modification. A disordered region spans residues aspartate 348–glutamate 603. Acidic residues predominate over residues glutamate 378 to glutamate 397. Positions alanine 418–glutamate 436 are enriched in basic and acidic residues. Residue serine 423 is modified to Phosphoserine. Residues glycine 437–aspartate 452 show a composition bias toward acidic residues. Residues proline 491–alanine 501 show a composition bias toward pro residues. A compositionally biased stretch (basic and acidic residues) spans histidine 577–glutamate 601.

In terms of assembly, interacts with HSPA8 on cell membrane. Interacts with C3AR1. Interacts with C1QBP. Multiple peptides are derived from VGF, with activities in synaptic plasticity, antidepression, penile erection, autonomic activation, and increases in energy expenditure. Central and peripheral nervous systems, synthesized exclusively in neuronal and neuroendocrine cells. VGF and several of the derived peptides are present in the brain.

The protein resides in the secreted. It is found in the cytoplasmic vesicle. It localises to the secretory vesicle. Its function is as follows. Secreted polyprotein that is packaged and proteolytically processed by prohormone convertases PCSK1 and PCSK2 in a cell-type-specific manner. VGF and peptides derived from its processing play many roles in neurogenesis and neuroplasticity associated with learning, memory, depression and chronic pain. Functionally, plays a role in the control of body fluid homeostasis by regulating vasopressin release. Suppresses presynaptic glutamatergic neurons connected to vasopressin neurons. Plays a role in the control of body fluid homeostasis by regulating vasopressin release. Activates GABAergic interneurons which are inhibitory neurons of the nervous system and thereby suppresses presynaptic glutamatergic neurons. Also stimulates feeding behavior in an orexin-dependent manner in the hypothalamus. Functions as a positive regulator for the activation of orexin neurons resulting in elevated gastric acid secretion and gastric emptying. In terms of biological role, secreted multifunctional neuropeptide that binds to different cell receptors and thereby plays multiple physiological roles including modulation of energy expenditure, pain, response to stress, gastric regulation, glucose homeostasis as well as lipolysis. Activates the G-protein-coupled receptor C3AR1 via a folding-upon-binding mechanism leading to enhanced lipolysis in adipocytes. Interacts with C1QBP receptor in macrophages and microglia causing increased levels of intracellular calcium and hypersensitivity. Its function is as follows. Plays a role in the regulation of memory formation and depression-related behaviors potentially by influencing synaptic plasticity and neurogenesis. Induces acute and transient activation of the NTRK2/TRKB receptor and subsequent CREB phosphorylation. Also induces insulin secretion in insulinoma cells by increasing intracellular calcium mobilization. In Rattus norvegicus (Rat), this protein is Neurosecretory protein VGF (Vgf).